Reading from the N-terminus, the 149-residue chain is Calmodulin-like protein (149 aa).

EF-hand domains lie at 6–41 (TTQA…VGSN), 42–76 (PTQQ…KMKY), 78–113 (DSEA…IGEK), and 113–148 (KLTK…SKSF). Ca(2+) is bound by residues Asp-19, Asp-21, Asp-23, Lys-25, and Glu-30.

The protein belongs to the calmodulin family.

The protein resides in the contractile vacuole. Functionally, mediates the control of a large number of enzymes, ion channels and other proteins by Ca(2+) ions. Among the enzymes to be stimulated by the calmodulin-Ca(2+) complex are a number of protein kinases and phosphatases. The chain is Calmodulin-like protein (calB) from Dictyostelium discoideum (Social amoeba).